The primary structure comprises 243 residues: Venom nerve growth factor (243 aa).

The first 18 residues, 1–18, serve as a signal peptide directing secretion; sequence MSMLCYTLIIAFLIGIWA. A propeptide spanning residues 19–125 is cleaved from the precursor; that stretch reads APKSEDNVPL…TLNRNIWANN (107 aa). The segment covering 47–66 has biased composition (basic and acidic residues); sequence GLKTSRNTDQHHPTPKKSED. A disordered region spans residues 47–70; it reads GLKTSRNTDQHHPTPKKSEDQELG. Disulfide bonds link cysteine 139-cysteine 204, cysteine 182-cysteine 232, and cysteine 192-cysteine 234. N-linked (GlcNAc...) asparagine glycosylation is present at asparagine 148.

Belongs to the NGF-beta family. Homodimer. Expressed by the venom gland.

It localises to the secreted. In terms of biological role, nerve growth factor is important for the development and maintenance of the sympathetic and sensory nervous systems. It stimulates division and differentiation of sympathetic and embryonic sensory neurons as well as basal forebrain cholinergic neurons in the brain. Its relevance in the snake venom is not clear. However, it has been shown to inhibit metalloproteinase-dependent proteolysis of platelet glycoprotein Ib alpha, suggesting a metalloproteinase inhibition to prevent metalloprotease autodigestion and/or protection against prey proteases. Binds a lipid between the two protein chains in the homodimer. The lipid-bound form promotes histamine relase from mouse mast cells, contrary to the lipid-free form. This Bungarus multicinctus (Many-banded krait) protein is Venom nerve growth factor.